Consider the following 254-residue polypeptide: Low affinity immunoglobulin gamma Fc region receptor III-A (254 aa).

An N-terminal signal peptide occupies residues 1 to 20 (MWQLLLPTALLLLVSAGMRA). At 21-206 (EDLPKAVVFL…SSISSFFPPG (186 aa)) the chain is on the extracellular side. Ig-like C2-type domains follow at residues 24 to 105 (PKAV…LEVH) and 107 to 189 (GWLL…VNIT). 2 cysteine pairs are disulfide-bonded: cysteine 47–cysteine 89 and cysteine 128–cysteine 172. N-linked (GlcNAc...) asparagine glycosylation occurs at asparagine 187. The chain crosses the membrane as a helical span at residues 207–229 (YQVSFCLVMVLLFAVDTGLYFSV). At 230 to 254 (KKSVPSSTRDWEDHKFKWSKDPQDK) the chain is on the cytoplasmic side.

Forms a heterooligomeric complex with ITAM-containing signaling subunits, either a homodimer of CD247, a homodimer of FCER1G or a heterodimer of CD247 and FCER1G, to form a functional receptor complex. Interacts (via transmembrane domain) with signaling subunits; this interaction is a prerequisite for receptor complex expression on the cell surface and intracellular signal transduction. Binds the Fc region of antigen-complexed IgG with a preference for IgG1 and IgG3 isotypes. Interacts with CD2; this interaction is involved in NK cell activation and cytotoxicity. Interacts with S100A4; this interaction inhibits PKC-dependent phosphorylation of FCGR3A. In terms of processing, glycosylated. Glycosylation plays an inhibitory role in the interaction with IgG1 and IgG2. Post-translationally, undergoes rapid ectodomain shedding upon NK cell stimulation. The soluble form is produced by a proteolytic cleavage mediated by ADAM17. Repeated stimulation causes receptor shedding, a mechanism that allows for increased NK cell motility and detachment from opsonized target cells while avoiding activation-induced NK cell apoptosis. In terms of tissue distribution, lymphocytes and monocytes.

It is found in the cell membrane. The protein localises to the secreted. Receptor for the invariable Fc fragment of immunoglobulin gamma (IgG). Optimally activated upon binding of clustered antigen-IgG complexes displayed on cell surfaces, triggers lysis of antibody-coated cells, a process known as antibody-dependent cellular cytotoxicity (ADCC). Does not bind free monomeric IgG, thus avoiding inappropriate effector cell activation in the absence of antigenic trigger. Mediates IgG effector functions on natural killer (NK) cells. Binds antigen-IgG complexes generated upon infection and triggers NK cell-dependent cytokine production and degranulation to limit viral load and propagation. Involved in the generation of memory-like adaptive NK cells capable to produce high amounts of IFNG and to efficiently eliminate virus-infected cells via ADCC. Regulates NK cell survival and proliferation, in particular by preventing NK cell progenitor apoptosis. Fc-binding subunit that associates with CD247 and/or FCER1G adapters to form functional signaling complexes. Following the engagement of antigen-IgG complexes, triggers phosphorylation of immunoreceptor tyrosine-based activation motif (ITAM)-containing adapters with subsequent activation of phosphatidylinositol 3-kinase signaling and sustained elevation of intracellular calcium that ultimately drive NK cell activation. The ITAM-dependent signaling coupled to receptor phosphorylation by PKC mediates robust intracellular calcium flux that leads to production of pro-inflammatory cytokines, whereas in the absence of receptor phosphorylation it mainly activates phosphatidylinositol 3-kinase signaling leading to cell degranulation. Costimulates NK cells and trigger lysis of target cells independently of IgG binding. Mediates the antitumor activities of therapeutic antibodies. Upon ligation on monocytes triggers TNFA-dependent ADCC of IgG-coated tumor cells. Mediates enhanced ADCC in response to afucosylated IgGs. The protein is Low affinity immunoglobulin gamma Fc region receptor III-A of Macaca mulatta (Rhesus macaque).